The sequence spans 394 residues: Putative 8-amino-7-oxononanoate synthase (394 aa).

A substrate-binding site is contributed by arginine 30. A pyridoxal 5'-phosphate-binding site is contributed by 117 to 118 (GY). Histidine 142 contributes to the substrate binding site. Pyridoxal 5'-phosphate is bound by residues serine 190, 215–218 (DEAH), and 246–249 (TLSK). N6-(pyridoxal phosphate)lysine is present on lysine 249. Threonine 364 provides a ligand contact to substrate.

The protein belongs to the class-II pyridoxal-phosphate-dependent aminotransferase family. BioF subfamily. In terms of assembly, homodimer. Pyridoxal 5'-phosphate is required as a cofactor.

The catalysed reaction is 6-carboxyhexanoyl-[ACP] + L-alanine + H(+) = (8S)-8-amino-7-oxononanoate + holo-[ACP] + CO2. It participates in cofactor biosynthesis; biotin biosynthesis. Its function is as follows. Catalyzes the decarboxylative condensation of pimeloyl-[acyl-carrier protein] and L-alanine to produce 8-amino-7-oxononanoate (AON), [acyl-carrier protein], and carbon dioxide. The chain is Putative 8-amino-7-oxononanoate synthase (bioF) from Nostoc punctiforme (strain ATCC 29133 / PCC 73102).